A 239-amino-acid polypeptide reads, in one-letter code: Large ribosomal subunit protein uL3 (239 aa).

Glutamine 151 carries the N5-methylglutamine modification.

Belongs to the universal ribosomal protein uL3 family. In terms of assembly, part of the 50S ribosomal subunit. Forms a cluster with proteins L14 and L19. Post-translationally, methylated by PrmB.

In terms of biological role, one of the primary rRNA binding proteins, it binds directly near the 3'-end of the 23S rRNA, where it nucleates assembly of the 50S subunit. The chain is Large ribosomal subunit protein uL3 from Ruegeria sp. (strain TM1040) (Silicibacter sp.).